Reading from the N-terminus, the 444-residue chain is C4-dicarboxylate transport protein 3 (444 aa).

The next 9 helical transmembrane spans lie at 22–42 (VLYV…WLWP), 60–80 (LIKM…IAHI), 95–115 (VYFE…GNLV), 162–182 (GEIL…MSLG), 198–218 (AVFG…FGAM), 236–256 (LIAT…GIIA), 321–341 (IYMT…LSFG), 346–366 (ILVV…AGFI), and 399–419 (LTNL…EGEL).

This sequence belongs to the dicarboxylate/amino acid:cation symporter (DAACS) (TC 2.A.23) family.

It is found in the cell inner membrane. Functionally, responsible for the transport of dicarboxylates such as succinate, fumarate, and malate from the periplasm across the membrane. In Bradyrhizobium diazoefficiens (strain JCM 10833 / BCRC 13528 / IAM 13628 / NBRC 14792 / USDA 110), this protein is C4-dicarboxylate transport protein 3.